Here is a 757-residue protein sequence, read N- to C-terminus: Polymeric immunoglobulin receptor (757 aa).

Positions 1-18 (MSRLFLACLLAIFPVVSM) are cleaved as a signal peptide. An Ig-like V-type 1; required for binding to polymeric IgA and IgM domain is found at 19–126 (KSPIFGPEEV…RGLNFDVSLE (108 aa)). The Extracellular segment spans residues 19–632 (KSPIFGPEEV…TGYSGSSKAL (614 aa)). 7 disulfide bridges follow: Cys-40–Cys-110, Cys-56–Cys-64, Cys-152–Cys-220, Cys-257–Cys-324, Cys-271–Cys-279, Cys-370–Cys-440, and Cys-384–Cys-394. N-linked (GlcNAc...) asparagine glycosylation occurs at Asn-83. Ig-like V-type domains lie at 145–237 (GRTV…DLQV), 250–341 (RSSV…VQAW), 353–457 (ASPS…LKVV), and 461–560 (PSLK…VYVA). Asn-420 and Asn-468 each carry an N-linked (GlcNAc...) asparagine glycan. Cystine bridges form between Cys-481/Cys-543, Cys-485/Cys-519, and Cys-495/Cys-502. The interval 607-627 (KDAAGGPGAPADPGRPTGYSG) is disordered. A helical transmembrane segment spans residues 633–653 (VSTLVPLALVLVAGVVAIGVV). Residues 654–757 (RARHRKNVDR…AATQNGPTEA (104 aa)) lie on the Cytoplasmic side of the membrane. Phosphoserine occurs at positions 665, 674, 681, and 727. Basic and acidic residues predominate over residues 679-688 (ENSRDFEGRD). The tract at residues 679–730 (ENSRDFEGRDNMGASPEAQETSLGGKDEFATTTEDTVESKEPKKAKRSSKEE) is disordered.

Interacts (mainly via CDR1-like domain) with dimeric IgA. Interacts (mainly via CDR2-like domain) with pentameric IgM. In terms of assembly, either free or part of the secretory IgA (sIgA) complex that consists of two, four or five IgA monomers, and two additional non-Ig polypeptides, namely the JCHAIN and the secretory component (the proteolytic product of PIGR). Free secretory component interacts with bacterial antigens toxA of C.difficile and eae of E.coli. In terms of processing, in the absence of dimeric IgA, Ser-727 is phosphorylated which allows PIGR to function normally. Post-translationally, N-glycosylated. N-glycosylation is required for anchoring IgA molecules to mucus, but is not necessary for Ig binding. In terms of tissue distribution, found in mammary gland, jejunum, lung, kidney and small intestine.

It localises to the cell membrane. Its subcellular location is the secreted. In terms of biological role, mediates selective transcytosis of polymeric IgA and IgM across mucosal epithelial cells. Binds polymeric IgA and IgM at the basolateral surface of epithelial cells. The complex is then transported across the cell to be secreted at the apical surface. During this process, a cleavage occurs that separates the extracellular (known as the secretory component) from the transmembrane segment. Functionally, through its N-linked glycans ensures anchoring of secretory IgA (sIgA) molecules to mucus lining the epithelial surface to neutralize extracellular pathogens. On its own (free form) may act as a non-specific microbial scavenger to prevent pathogen interaction with epithelial cells. The chain is Polymeric immunoglobulin receptor (PIGR) from Bos taurus (Bovine).